The primary structure comprises 108 residues: MRTLVASLCVFAVFSAVCCDVQERGHTYRTRNVTVEDGACVFERNVIPDGETKALNSPCVLSTCYAAAREVNSTLCPNIGVEQGCRVEWTPVGEYPNCCPKHVCPTTS.

A signal peptide spans 1–19 (MRTLVASLCVFAVFSAVCC). Intrachain disulfides connect C40–C64, C59–C98, C76–C99, and C85–C104.

It belongs to the CirpT family. As to expression, expressed in salivary glands.

The protein localises to the secreted. Functionally, complement inhibitor. Prevents complement-mediated activation of C5 by sterically preventing direct binding of C5 to its convertase (binding with domains MG4 and MG5). Binds C5 at a different binding site than the other tick complement inhibitors OmCI and RaCI3, and the drug eculizumab. Inhibits the complement in human, rat and guinea pig, and also shows a reduced inhibition in rabbit and pig. The protein is Complement inhibitor CirpT2 of Dermacentor andersoni (Rocky mountain wood tick).